The primary structure comprises 48 residues: MAVPKRRVSHSRAAKRRTHYKVTLPVPVKDKDGSWKMPHRINKTTGEY.

The tract at residues 28–48 is disordered; the sequence is VKDKDGSWKMPHRINKTTGEY.

It belongs to the bacterial ribosomal protein bL32 family.

This is Large ribosomal subunit protein bL32 from Campylobacter concisus (strain 13826).